The sequence spans 240 residues: ATP-dependent dethiobiotin synthetase BioD (240 aa).

13–18 (GVGKTI) provides a ligand contact to ATP. A Mg(2+)-binding site is contributed by threonine 17. Lysine 38 is an active-site residue. Threonine 42 provides a ligand contact to substrate. ATP contacts are provided by residues aspartate 55, 116–119 (EGVG), and 214–216 (PYL). The Mg(2+) site is built by aspartate 55 and glutamate 116.

The protein belongs to the dethiobiotin synthetase family. Homodimer. The cofactor is Mg(2+).

Its subcellular location is the cytoplasm. The catalysed reaction is (7R,8S)-7,8-diammoniononanoate + CO2 + ATP = (4R,5S)-dethiobiotin + ADP + phosphate + 3 H(+). Its pathway is cofactor biosynthesis; biotin biosynthesis; biotin from 7,8-diaminononanoate: step 1/2. Catalyzes a mechanistically unusual reaction, the ATP-dependent insertion of CO2 between the N7 and N8 nitrogen atoms of 7,8-diaminopelargonic acid (DAPA, also called 7,8-diammoniononanoate) to form a ureido ring. This Thermodesulfovibrio yellowstonii (strain ATCC 51303 / DSM 11347 / YP87) protein is ATP-dependent dethiobiotin synthetase BioD.